Reading from the N-terminus, the 505-residue chain is Cytochrome P450 9b2 (505 aa).

Cysteine 449 provides a ligand contact to heme.

Belongs to the cytochrome P450 family. The cofactor is heme.

Its subcellular location is the endoplasmic reticulum membrane. The protein localises to the microsome membrane. May be involved in the metabolism of insect hormones and in the breakdown of synthetic insecticides. In Drosophila melanogaster (Fruit fly), this protein is Cytochrome P450 9b2 (Cyp9b2).